The following is a 1012-amino-acid chain: Structural polyprotein (1012 aa).

An a divalent metal cation-binding site is contributed by aspartate 30. A Peptidase S50 domain is found at 513 to 755 (ADKGYEVVAN…AGRQYHLAMA (243 aa)). The Nucleophile role is filled by serine 652. Residue lysine 692 is part of the active site. Residues 970–1012 (MEMKHRNPRRALPKPKPKPNAPTQRPPGRLGRWIRTVSDEDLE) form a disordered region. Basic residues predominate over residues 975–986 (RNPRRALPKPKP). Positions 1003 to 1012 (IRTVSDEDLE) are interaction with VP1 protein.

As to quaternary structure, homotrimer. A central divalent metal stabilizes the VP2 trimer. Interacts with host ITGA4/ITGB1. Homodimer. Interacts (via C-terminus) with VP1 in the cytoplasm. Interacts with VP2. Post-translationally, specific enzymatic cleavages yield mature proteins. The capsid assembly seems to be regulated by polyprotein processing. The protease VP4 cleaves itself off the polyprotein, thus releasing pre-VP2 and VP3 within the infected cell. During capsid assembly, the C-terminus of pre-VP2 is further processed by VP4, giving rise to VP2, the external capsid protein and three small peptides that all stay closely associated with the capsid.

The protein localises to the virion. The protein resides in the host cytoplasm. In terms of biological role, capsid protein VP2 self assembles to form an icosahedral capsid with a T=13 symmetry, about 70 nm in diameter, and consisting of 260 VP2 trimers. The capsid encapsulates the genomic dsRNA. VP2 is also involved in attachment and entry into the host cell by interacting with host ITGA4/ITGB1. The precursor of VP2 plays an important role in capsid assembly. First, pre-VP2 and VP2 oligomers assemble to form a procapsid. Then, the pre-VP2 intermediates may be processed into VP2 proteins by proteolytic cleavage mediated by VP4 to obtain the mature virion. The final capsid is composed of pentamers and hexamers but VP2 has a natural tendency to assemble into all-pentameric structures. Therefore pre-VP2 may be required to allow formation of the hexameric structures. Its function is as follows. Protease VP4 is a serine protease that cleaves the polyprotein into its final products. Pre-VP2 is first partially cleaved, and may be completely processed by VP4 upon capsid maturation. Functionally, capsid protein VP3 plays a key role in virion assembly by providing a scaffold for the capsid made of VP2. May self-assemble to form a T=4-like icosahedral inner-capsid composed of at least 180 trimers. Plays a role in genomic RNA packaging by recruiting VP1 into the capsid and interacting with the dsRNA genome segments to form a ribonucleoprotein complex. Additionally, the interaction of the VP3 C-terminal tail with VP1 removes the inherent structural blockade of the polymerase active site. Thus, VP3 can also function as a transcriptional activator. In terms of biological role, structural peptide 1 is a small peptide derived from pre-VP2 C-terminus. It destabilizes and perforates cell membranes, suggesting a role during entry. Structural peptide 2 is a small peptide derived from pVP2 C-terminus. It is not essential for the virus viability, but viral growth is affected when missing. Its function is as follows. Structural peptide 3 is a small peptide derived from pVP2 C-terminus. It is not essential for the virus viability, but viral growth is affected when missing. Functionally, structural peptide 4 is a small peptide derived from pVP2 C-terminus. It is essential for the virus viability. This Avian infectious bursal disease virus (strain Chicken/Cuba/Soroa/1998) (IBDV) protein is Structural polyprotein.